The primary structure comprises 667 residues: Probable potassium transport system protein Kup (667 aa).

The next 12 helical transmembrane spans lie at 5–25 (GLLI…LYVM), 47–67 (ISLI…IIAL), 88–108 (AAWL…DGTL), 133–153 (VSNQ…LFSI), 164–184 (AFGP…LINI), 210–230 (AGFA…ALYS), 243–263 (SWPF…VWIL), 287–307 (LASI…LITG), 336–356 (IYIP…VLFF), 367–387 (GLSI…WLVL), 393–413 (LANL…MGSS), and 420–440 (GGYV…VWYF).

This sequence belongs to the HAK/KUP transporter (TC 2.A.72) family.

It localises to the cell membrane. The enzyme catalyses K(+)(in) + H(+)(in) = K(+)(out) + H(+)(out). Transport of potassium into the cell. Likely operates as a K(+):H(+) symporter. This is Probable potassium transport system protein Kup from Lactobacillus delbrueckii subsp. bulgaricus (strain ATCC 11842 / DSM 20081 / BCRC 10696 / JCM 1002 / NBRC 13953 / NCIMB 11778 / NCTC 12712 / WDCM 00102 / Lb 14).